The chain runs to 432 residues: Ornithine decarboxylase (432 aa).

K98 is modified (N6-(pyridoxal phosphate)lysine). Pyridoxal 5'-phosphate contacts are provided by residues S229, G266, and 296 to 299; that span reads EPGR. 341–342 serves as a coordination point for substrate; sequence FD. C377 functions as the Proton donor; shared with dimeric partner in the catalytic mechanism. Residue D378 participates in substrate binding. Y407 provides a ligand contact to pyridoxal 5'-phosphate.

The protein belongs to the Orn/Lys/Arg decarboxylase class-II family. As to quaternary structure, homodimer. Only the dimer is catalytically active, as the active sites are constructed of residues from both monomers. It depends on pyridoxal 5'-phosphate as a cofactor.

Its subcellular location is the cytoplasm. It catalyses the reaction L-ornithine + H(+) = putrescine + CO2. The protein operates within amine and polyamine biosynthesis; putrescine biosynthesis via L-ornithine pathway; putrescine from L-ornithine: step 1/1. Its activity is regulated as follows. Inhibited by antizyme (AZ) OAZ1 in response to polyamine levels. AZ inhibits the assembly of the functional homodimer by binding to ODC monomers and targeting them for ubiquitin-independent proteolytic destruction by the 26S proteasome. Catalyzes the first and rate-limiting step of polyamine biosynthesis that converts ornithine into putrescine, which is the precursor for the polyamines, spermidine and spermine. Polyamines are essential for cell proliferation and are implicated in cellular processes, ranging from DNA replication to apoptosis. The chain is Ornithine decarboxylase (spe1) from Schizosaccharomyces pombe (strain 972 / ATCC 24843) (Fission yeast).